A 520-amino-acid chain; its full sequence is Bifunctional purine biosynthesis protein PurH (520 aa).

The MGS-like domain maps to 1–146 (MAPVALLSVS…KNHADVAVLT (146 aa)).

The protein belongs to the PurH family.

It catalyses the reaction (6R)-10-formyltetrahydrofolate + 5-amino-1-(5-phospho-beta-D-ribosyl)imidazole-4-carboxamide = 5-formamido-1-(5-phospho-D-ribosyl)imidazole-4-carboxamide + (6S)-5,6,7,8-tetrahydrofolate. The catalysed reaction is IMP + H2O = 5-formamido-1-(5-phospho-D-ribosyl)imidazole-4-carboxamide. It participates in purine metabolism; IMP biosynthesis via de novo pathway; 5-formamido-1-(5-phospho-D-ribosyl)imidazole-4-carboxamide from 5-amino-1-(5-phospho-D-ribosyl)imidazole-4-carboxamide (10-formyl THF route): step 1/1. The protein operates within purine metabolism; IMP biosynthesis via de novo pathway; IMP from 5-formamido-1-(5-phospho-D-ribosyl)imidazole-4-carboxamide: step 1/1. This chain is Bifunctional purine biosynthesis protein PurH, found in Synechococcus sp. (strain CC9902).